We begin with the raw amino-acid sequence, 346 residues long: MSGNNSSLSYKDAGVDIDAGNALVDRIKGAVKRTRRPEVMGGIGGFGALCELPTKYKQPVLVSGTDGVGTKLRLALDMNKHDTIGVDLVAMCVNDLIVQGAEPLFFLDYYATGKLDVDTAADVVSGIADGCVQAGCALIGGETAEMPGMYEGEDYDVAGFCVGVVEKEDVIDGTKVAAGDALIAVGSSGPHSNGYSLIRKILEVSGADKNEELAGRTIGEHLLEPTKIYIKSALKMIEKHDIHAISHITGGGFWENIPRVLLEGTKAVIDGNSWEWPIIFKWLQEKGNVETHEMYRTFNCGVGLVVALPKDQADAAVALLKEEGENAWVIGEIAQAEANEEQVEIQ.

This sequence belongs to the AIR synthase family.

The protein resides in the cytoplasm. The catalysed reaction is 2-formamido-N(1)-(5-O-phospho-beta-D-ribosyl)acetamidine + ATP = 5-amino-1-(5-phospho-beta-D-ribosyl)imidazole + ADP + phosphate + H(+). The protein operates within purine metabolism; IMP biosynthesis via de novo pathway; 5-amino-1-(5-phospho-D-ribosyl)imidazole from N(2)-formyl-N(1)-(5-phospho-D-ribosyl)glycinamide: step 2/2. The chain is Phosphoribosylformylglycinamidine cyclo-ligase from Vibrio campbellii (strain ATCC BAA-1116).